We begin with the raw amino-acid sequence, 737 residues long: Fibronectin type III domain-containing protein 7 (737 aa).

A signal peptide spans 1–25 (MAGRPEKCFSLIRFTLLCLKMVISS). 8 Fibronectin type-III domains span residues 28–115 (APEI…TVLA), 116–203 (APVL…SPRA), 204–288 (PANI…TVAC), 289–373 (APGR…TAPC), 374–459 (CPND…TAPC), 460–544 (SPEI…TVPC), 545–633 (CPAG…CPLG), and 631–715 (PLGV…YSVT). N-linked (GlcNAc...) asparagine glycosylation occurs at asparagine 230. Asparagine 433 carries an N-linked (GlcNAc...) asparagine glycan.

Its subcellular location is the secreted. This is Fibronectin type III domain-containing protein 7 (Fndc7) from Mus musculus (Mouse).